Here is a 260-residue protein sequence, read N- to C-terminus: Pyridoxine 5'-phosphate synthase (260 aa).

Position 15 (Asn-15) interacts with 3-amino-2-oxopropyl phosphate. 17-18 (DH) lines the 1-deoxy-D-xylulose 5-phosphate pocket. Position 26 (Arg-26) interacts with 3-amino-2-oxopropyl phosphate. His-51 functions as the Proton acceptor in the catalytic mechanism. Positions 53 and 58 each coordinate 1-deoxy-D-xylulose 5-phosphate. Glu-78 (proton acceptor) is an active-site residue. Thr-108 lines the 1-deoxy-D-xylulose 5-phosphate pocket. Residue His-199 is the Proton donor of the active site. 3-amino-2-oxopropyl phosphate is bound by residues Gly-200 and 221–222 (GH).

The protein belongs to the PNP synthase family. Homooctamer; tetramer of dimers.

The protein localises to the cytoplasm. It carries out the reaction 3-amino-2-oxopropyl phosphate + 1-deoxy-D-xylulose 5-phosphate = pyridoxine 5'-phosphate + phosphate + 2 H2O + H(+). It participates in cofactor biosynthesis; pyridoxine 5'-phosphate biosynthesis; pyridoxine 5'-phosphate from D-erythrose 4-phosphate: step 5/5. Functionally, catalyzes the complicated ring closure reaction between the two acyclic compounds 1-deoxy-D-xylulose-5-phosphate (DXP) and 3-amino-2-oxopropyl phosphate (1-amino-acetone-3-phosphate or AAP) to form pyridoxine 5'-phosphate (PNP) and inorganic phosphate. This is Pyridoxine 5'-phosphate synthase from Cupriavidus necator (strain ATCC 17699 / DSM 428 / KCTC 22496 / NCIMB 10442 / H16 / Stanier 337) (Ralstonia eutropha).